Consider the following 142-residue polypeptide: ATP synthase epsilon chain (142 aa).

This sequence belongs to the ATPase epsilon chain family. As to quaternary structure, F-type ATPases have 2 components, CF(1) - the catalytic core - and CF(0) - the membrane proton channel. CF(1) has five subunits: alpha(3), beta(3), gamma(1), delta(1), epsilon(1). CF(0) has three main subunits: a, b and c.

It localises to the cell inner membrane. Produces ATP from ADP in the presence of a proton gradient across the membrane. This chain is ATP synthase epsilon chain, found in Coxiella burnetii (strain CbuK_Q154) (Coxiella burnetii (strain Q154)).